The sequence spans 78 residues: Acyl carrier protein (78 aa).

The Carrier domain occupies Ser2–Gln77. Ser37 is subject to O-(pantetheine 4'-phosphoryl)serine.

It belongs to the acyl carrier protein (ACP) family. In terms of processing, 4'-phosphopantetheine is transferred from CoA to a specific serine of apo-ACP by AcpS. This modification is essential for activity because fatty acids are bound in thioester linkage to the sulfhydryl of the prosthetic group.

It is found in the cytoplasm. It functions in the pathway lipid metabolism; fatty acid biosynthesis. In terms of biological role, carrier of the growing fatty acid chain in fatty acid biosynthesis. In Pectobacterium atrosepticum (strain SCRI 1043 / ATCC BAA-672) (Erwinia carotovora subsp. atroseptica), this protein is Acyl carrier protein.